Reading from the N-terminus, the 512-residue chain is Cytochrome P450 monooxygenase 208 (512 aa).

Residues 4–24 form a helical membrane-spanning segment; that stretch reads LFLVLDTGAAVLLVALLFVVY. Cys-438 is a binding site for heme.

The protein belongs to the cytochrome P450 family. Heme serves as cofactor.

Its subcellular location is the membrane. Its pathway is secondary metabolite biosynthesis. Cytochrome P450 monooxygenase that is able to use 7-ethoxycoumarin as a substrate for oxidation. This Postia placenta (strain ATCC 44394 / Madison 698-R) (Brown rot fungus) protein is Cytochrome P450 monooxygenase 208.